The primary structure comprises 255 residues: MKRLNKLVLYISFLILVISFTAGCGMGKEAEIKKSFEKTLSMYPIKNLEDLYDKEGYRDDQFDKNDKGTWIINSEMVVQPKGERMKSKGMVLYMNRNTKTTTGKYIVSETLHDEDGRPKSKDKEYPVKMVDNKIIPTKGIKDENIKKEIENFKFFAQYGSFKDLSKYKDGDISYNPEVPSYSAKYQLTNDDYNVKQLRKRYKIPTNKAPKLLLKGSGDLKGSSVGYKDIEFTFVEKKGENTFFTDSLHLEPSEDK.

The signal sequence occupies residues 1-23 (MKRLNKLVLYISFLILVISFTAG). Cys-24 is lipidated: N-palmitoyl cysteine. The S-diacylglycerol cysteine moiety is linked to residue Cys-24.

It belongs to the staphylococcal tandem lipoprotein family.

It is found in the cell membrane. This is an uncharacterized protein from Staphylococcus aureus (strain N315).